Consider the following 79-residue polypeptide: Cytochrome c oxidase subunit 7A1, mitochondrial (79 aa).

A mitochondrion-targeting transit peptide spans 1 to 21; it reads MQALRVSQALIRSFSSTARNR. The Mitochondrial matrix segment spans residues 22–46; the sequence is FQNRVREKQKLFQEDNDIPLYLKGG. The helical transmembrane segment at 47–75 threads the bilayer; sequence IVDNILYRVTMTLCLGGTVYSLYSLGWAS. The Mitochondrial intermembrane segment spans residues 76–79; it reads FPRN.

It belongs to the cytochrome c oxidase VIIa family. In terms of assembly, component of the complex IV (CIV, cytochrome c oxidase), a multisubunit enzyme composed of 14 subunits. The complex is composed of a catalytic core of 3 subunits MT-CO1, MT-CO2 and MT-CO3, encoded in the mitochondrial DNA, and 11 supernumerary subunits COX4I1 (or COX4I2), COX5A, COX5B, COX6A2 (or COX6A1), COX6B1 (or COX6B2), COX6C, COX7A1 (or COX7A2), COX7B, COX7C, COX8B and NDUFA4, which are encoded in the nuclear genome. The complex exists as a monomer or a dimer and forms supercomplexes (SCs) in the inner mitochondrial membrane with NADH-ubiquinone oxidoreductase (complex I, CI) and ubiquinol-cytochrome c oxidoreductase (cytochrome b-c1 complex, complex III, CIII), resulting in different assemblies (supercomplex SCI(1)III(2)IV(1) and megacomplex MCI(2)III(2)IV(2)).

It localises to the mitochondrion inner membrane. It functions in the pathway energy metabolism; oxidative phosphorylation. Functionally, component of the mitochondrial respiratory complex IV (CIV, also named cytochrome c oxidase complex), the last enzyme in the mitochondrial electron transport chain which drives oxidative phosphorylation. The CIV complex is the component of the respiratory chain that catalyzes the reduction of oxygen to water. Acts as an assembly factor that specifically drives the homodimerization of CIV complexes, mediating the formation of mitochondrial respiratory supercomplexes (respirasomes) containing two CIV: supercomplxes with two molecules of CIV show improved activity. Despite being highly expressed in brown adipose tissue, not required for thermogenesis. This is Cytochrome c oxidase subunit 7A1, mitochondrial (COX7A1) from Homo sapiens (Human).